A 156-amino-acid polypeptide reads, in one-letter code: Small ribosomal subunit protein uS7 (156 aa).

The protein belongs to the universal ribosomal protein uS7 family. In terms of assembly, part of the 30S ribosomal subunit. Contacts proteins S9 and S11.

Functionally, one of the primary rRNA binding proteins, it binds directly to 16S rRNA where it nucleates assembly of the head domain of the 30S subunit. Is located at the subunit interface close to the decoding center, probably blocks exit of the E-site tRNA. The chain is Small ribosomal subunit protein uS7 from Mycoplasma mobile (strain ATCC 43663 / 163K / NCTC 11711) (Mesomycoplasma mobile).